A 589-amino-acid chain; its full sequence is PAN2-PAN3 deadenylation complex subunit pan3 (589 aa).

The segment at 1–32 (MSVRKNSPASPKPTSRSRESSRSPSVTDLKDH) is disordered. The C3H1-type zinc finger occupies 34–63 (KAKRTLCRNILLYGSCKHSENGCAFRHDGP). The PABPC-interacting motif-2 (PAM-2) motif lies at 74–94 (YSVKKKLNAASASFQPVRALP). A pseudokinase domain region spans residues 201–457 (EASRQTISAL…NLELFLQNHI (257 aa)). Residues Lys255 and 302 to 309 (DFYPCTTT) each bind ATP. Residues 458–496 (ESFFPIMSSPYVECEKMERKISDAFQHGRFFNILCKIMF) adopt a coiled-coil conformation. The tract at residues 497–589 (IIDNNRASRE…DNVYEMEINS (93 aa)) is knob domain.

Belongs to the protein kinase superfamily. PAN3 family. In terms of assembly, homodimer. Forms a heterotrimer with a catalytic subunit pan2 to form the poly(A)-nuclease (PAN) deadenylation complex. Interacts (via PAM-2 motif) with poly(A)-binding protein pab1 (via PABC domain), conferring substrate specificity of the enzyme complex.

The protein localises to the cytoplasm. The protein resides in the nucleus. In terms of biological role, regulatory subunit of the poly(A)-nuclease (PAN) deadenylation complex, one of two cytoplasmic mRNA deadenylases involved in mRNA turnover. PAN specifically shortens poly(A) tails of RNA and the activity is stimulated by poly(A)-binding protein pab1. PAN deadenylation is followed by rapid degradation of the shortened mRNA tails by the CCR4-NOT complex. Deadenylated mRNAs are then degraded by two alternative mechanisms, namely exosome-mediated 3'-5' exonucleolytic degradation, or deadenylation-dependent mRNA decaping and subsequent 5'-3' exonucleolytic degradation by xrn1. May also be involved in post-transcriptional maturation of mRNA poly(A) tails. ppk26/pan3 acts as a positive regulator for PAN activity, recruiting the catalytic subunit pan2 to mRNA via its interaction with RNA and with pab1. In Schizosaccharomyces pombe (strain 972 / ATCC 24843) (Fission yeast), this protein is PAN2-PAN3 deadenylation complex subunit pan3 (ppk26).